Reading from the N-terminus, the 869-residue chain is Ubiquitin carboxyl-terminal hydrolase 29 (869 aa).

2 stretches are compositionally biased toward polar residues: residues 104-120 (SSTPCESQQPMEPMSSQ) and 140-150 (SLNTTPESGTP). The tract at residues 104-226 (SSTPCESQQP…KAVTLREQEK (123 aa)) is disordered. A compositionally biased stretch (basic and acidic residues) spans 187-200 (VNKDIPKENTPDQK). Over residues 201–212 (KKSRRYYSRNRG) the composition is skewed to basic residues. A compositionally biased stretch (basic and acidic residues) spans 213 to 226 (GKAEKAVTLREQEK). In terms of domain architecture, USP spans 289–826 (EGFPNLGNTC…SGYIFFYMHN (538 aa)). The Nucleophile role is filled by Cys298. Positions 723-754 (SQEDPEKDLSRSPELQEDDPHSFAFGSDDSKD) are disordered. His781 (proton acceptor) is an active-site residue.

The protein belongs to the peptidase C19 family. In terms of tissue distribution, predominantly expressed in brain and testis. Highest expression levels in adult brain, especially in the cerebral cortex and hippocampus, and in the forebrain, face, and limb buds of midgestation mouse embryos.

The protein resides in the cytoplasm. Its subcellular location is the perinuclear region. The catalysed reaction is Thiol-dependent hydrolysis of ester, thioester, amide, peptide and isopeptide bonds formed by the C-terminal Gly of ubiquitin (a 76-residue protein attached to proteins as an intracellular targeting signal).. Functionally, deubiquitinase involved in innate antiviral immunity by mediating 'Lys-48'-linked deubiquitination of CGAS, thereby promoting its stabilization. This Mus musculus (Mouse) protein is Ubiquitin carboxyl-terminal hydrolase 29.